A 552-amino-acid polypeptide reads, in one-letter code: Cytochrome P450 monooxyhenase eriI (552 aa).

A helical transmembrane segment spans residues 9 to 26 (FALKASAAVAVLLLAAWV). 2 N-linked (GlcNAc...) asparagine glycosylation sites follow: asparagine 50 and asparagine 447. Residue cysteine 495 participates in heme binding.

The protein belongs to the cytochrome P450 family. Requires heme as cofactor.

The protein localises to the membrane. It catalyses the reaction (-)-cyatha-3,12-diene + reduced [NADPH--hemoprotein reductase] + O2 = erinacol + oxidized [NADPH--hemoprotein reductase] + H2O + H(+). Its pathway is secondary metabolite biosynthesis. In terms of biological role, cytochrome P450 monooxygenase; part of the gene cluster that mediates the biosynthesis of erinacines, cyathane-xylosides that show unique biological activities, including leishmanicidal activity, stimulating activity for nerve growth-factor synthesis, and agonistic activity toward the kappa opioid receptor. Within the pathway, eriI hydroxylates cyatha-3,12-diene at C-14 of the seven-membered ring to yield erinacol. The first step of the erinacines biosynthesis pathway is catalyzed by the geranylgeranyl diphosphate (GGPP) synthase eriE via conversion of farnesyl pyrophosphate and isopentyl pyrophosphate into geranylgeranyl pyrophosphate (GGPP). GGPP is then substrate of the diterpene cyclase eriG for the production of cyatha-3,12-diene. The cytochrome P450 monooxygenase eriI then hydroxylates cyatha-3,12-diene at C-14 of the seven-membered ring to produce erinacol, which is further hydroxylated at C-15 by the cytochrome P450 monooxygenase eriC to yield cyathadiol. The cytochrome P450 monooxygenase eriA then catalyzes C-11 hydroxylation in the presence of the short chain dehydrogenase/reductase (SDR) eriH, which leads to the production of cyathatriol. The acetyltransferase eriL converts cyathatriol into 11-O-acetyl-cyathatriol. The SDR eriH catalyzes further oxidation of 11-O-acetyl-cyathatriol into 1-O-acetylcyathin A3. Finally, the glycosyl transferase eriJ tranfers xylose from UDP-xylose onto C-14 of 11-O-acetyl-cyathatriol to form eracine Q. EriJ is also able to convert 11-O-acetyl-cyathatriol to eracine Q2 by using UDP-D-glucose as cosubstrate, but at a lower rate. Cytochrome P450 monooxygenase; part of the gene cluster that mediates the biosynthesis of erinacines, cyathane-xylosides that show unique biological activities, including leishmanicidal activity, stimulating activity for nerve growth-factor synthesis, and agonistic activity toward the kappa opioid receptor. The geranylgeranyl diphosphate (GGPP) synthase eriE catalyzes the first step in erinacines biosynthesis via conversion of farnesyl pyrophosphate and isopentyl pyrophosphate into geranylgeranyl pyrophosphate (GGPP). GGPP is then substrate of the diterpene cyclase eriG for the production of cyatha-3,12-diene. EriG is unable to use geranyl diphosphate (GPP) or farnesyl diphosphate (FPP) as substrates. The cytochrome P450 monooxygenase eriI then hydroxylates cyatha-3,12-diene at C-14 of the seven-membered ring to produce erinacol, which is further hydroxylated at C-15 by the cytochrome P450 monooxygenase eriC to yield cyathadiol. The cytochrome P450 monooxygenase eriA then catalyzes C-11 hydroxylation in the presence of the short chain dehydrogenase/reductase (SDR) eriH, which leads to the production of cyathatriol. The acetyltransferase eriL converts cyathatriol into 11-O-acetyl-cyathatriol. The SDR eriH catalyzes further oxidation of 11-O-acetyl-cyathatriol into 1-O-acetylcyathin A3. Finally, the glycosyl transferase eriJ tranfers xylose from UDP-xylose onto C-14 of 11-O-acetyl-cyathatriol to form eracine Q. EriJ is also able to convert 11-O-acetyl-cyathatriol to eracine Q2 by using UDP-D-glucose as cosubstrate, but at a lower rate. In the absence of eriL and eriJ, the SDR eriH is able to convert cyathatriol to cyathin A3; this is likely a switching mechanism in the biosynthesis of cyathins (C-14 ketogroup)and erinacines (C-14 glycosylated group). The roles of the SDR eriB, the polyprenyl transferase eriF and the dehydrogenase eriK have still to be identified. The protein is Cytochrome P450 monooxyhenase eriI of Hericium erinaceus (Lion's mane mushroom).